The chain runs to 486 residues: Ribulose bisphosphate carboxylase large chain (486 aa).

Residues N126 and T176 each coordinate substrate. K178 (proton acceptor) is an active-site residue. Substrate is bound at residue K180. K204, D206, and E207 together coordinate Mg(2+). K204 carries the N6-carboxylysine modification. Residue H296 is the Proton acceptor of the active site. Residues R297, H329, and S381 each contribute to the substrate site.

The protein belongs to the RuBisCO large chain family. Type I subfamily. As to quaternary structure, heterohexadecamer of 8 large chains and 8 small chains. Mg(2+) is required as a cofactor.

It carries out the reaction 2 (2R)-3-phosphoglycerate + 2 H(+) = D-ribulose 1,5-bisphosphate + CO2 + H2O. It catalyses the reaction D-ribulose 1,5-bisphosphate + O2 = 2-phosphoglycolate + (2R)-3-phosphoglycerate + 2 H(+). RuBisCO catalyzes two reactions: the carboxylation of D-ribulose 1,5-bisphosphate, the primary event in carbon dioxide fixation, as well as the oxidative fragmentation of the pentose substrate. Both reactions occur simultaneously and in competition at the same active site. This Cupriavidus taiwanensis (strain DSM 17343 / BCRC 17206 / CCUG 44338 / CIP 107171 / LMG 19424 / R1) (Ralstonia taiwanensis (strain LMG 19424)) protein is Ribulose bisphosphate carboxylase large chain.